The following is a 150-amino-acid chain: Large ribosomal subunit protein bL9 (150 aa).

It belongs to the bacterial ribosomal protein bL9 family.

Binds to the 23S rRNA. The sequence is that of Large ribosomal subunit protein bL9 from Buchnera aphidicola subsp. Schizaphis graminum (strain Sg).